Reading from the N-terminus, the 228-residue chain is MIGIIGAMEEEVTILKNKLTQLSEISVAHVKFYTGILKDREVVITQSGIGKVNAAISTTLLINKFKPDIIINTGSAGALDESLNVGDVLISDDVKYHDADATAFGYEYGQIPQMPVAFQSSKPLIEKVSQVVQQQQLTAKVGLIVSGDSFIGSVEQRQKIKKAFPNAMAVEMEATAIAQTCYQFNVPFVVVRAVSDLANGEAEISFEAFLEKAAVSSSQTVEALVSQL.

Glu-11 (proton acceptor) is an active-site residue. Residues Gly-77, Ile-151, and Met-172–Glu-173 each bind substrate. Asp-196 (proton donor) is an active-site residue.

This sequence belongs to the PNP/UDP phosphorylase family. MtnN subfamily.

The enzyme catalyses S-adenosyl-L-homocysteine + H2O = S-(5-deoxy-D-ribos-5-yl)-L-homocysteine + adenine. It catalyses the reaction S-methyl-5'-thioadenosine + H2O = 5-(methylsulfanyl)-D-ribose + adenine. It carries out the reaction 5'-deoxyadenosine + H2O = 5-deoxy-D-ribose + adenine. Its pathway is amino-acid biosynthesis; L-methionine biosynthesis via salvage pathway; S-methyl-5-thio-alpha-D-ribose 1-phosphate from S-methyl-5'-thioadenosine (hydrolase route): step 1/2. Its function is as follows. Catalyzes the irreversible cleavage of the glycosidic bond in both 5'-methylthioadenosine (MTA) and S-adenosylhomocysteine (SAH/AdoHcy) to adenine and the corresponding thioribose, 5'-methylthioribose and S-ribosylhomocysteine, respectively. Also cleaves 5'-deoxyadenosine, a toxic by-product of radical S-adenosylmethionine (SAM) enzymes, into 5-deoxyribose and adenine. The sequence is that of 5'-methylthioadenosine/S-adenosylhomocysteine nucleosidase from Staphylococcus aureus (strain bovine RF122 / ET3-1).